Here is a 208-residue protein sequence, read N- to C-terminus: Uracil phosphoribosyltransferase (208 aa).

5-phospho-alpha-D-ribose 1-diphosphate is bound by residues arginine 78, arginine 103, and 130–138; that span reads DPMLATGGS. Uracil-binding positions include isoleucine 193 and 198–200; that span reads GDA. 5-phospho-alpha-D-ribose 1-diphosphate is bound at residue aspartate 199.

It belongs to the UPRTase family. The cofactor is Mg(2+).

The catalysed reaction is UMP + diphosphate = 5-phospho-alpha-D-ribose 1-diphosphate + uracil. The protein operates within pyrimidine metabolism; UMP biosynthesis via salvage pathway; UMP from uracil: step 1/1. Its activity is regulated as follows. Allosterically activated by GTP. Catalyzes the conversion of uracil and 5-phospho-alpha-D-ribose 1-diphosphate (PRPP) to UMP and diphosphate. The chain is Uracil phosphoribosyltransferase from Pelobacter propionicus (strain DSM 2379 / NBRC 103807 / OttBd1).